Reading from the N-terminus, the 320-residue chain is MTAPQKHNLFSPEPHYIPGYAGFYPQLRYRVGDTYGRTTAQLLTDPSVQKSPCSVLAPVAKPKFIEDFSKPKPPFVPCRDLIEPYIPHYTGLKPYKNFEMLGRFPPQEADAQGSLGGENVSRQVPLPAGFMPYPPYAPCPPGRKGDSRDLGHPGLRLALGEEAWKSTAPACEAPGQYQLYHCRRDESPPLAHWQETLDVGRFHRLPQLGHPKLIQRKAISGYAGFVPRFAWVMGMNYRDGVTQAMDEFDKSQFLLRNPICALGERLPSTHWPSNTIYRSQGLIPFYMGFIPSMQDNYALTFGNSTRKAYQKELERRSRTL.

Belongs to the CIMIP2 family. Microtubule inner protein component of sperm flagellar doublet microtubules. In terms of tissue distribution, expressed in sperm.

The protein localises to the cytoplasm. Its subcellular location is the cytoskeleton. It localises to the flagellum axoneme. Its function is as follows. Microtubule inner protein (MIP) part of the dynein-decorated doublet microtubules (DMTs) in flagellum axoneme. Binds to the intra-tubulin interfaces. The polypeptide is Ciliary microtubule inner protein 2A (CIMIP2A) (Bos taurus (Bovine)).